The following is a 312-amino-acid chain: Nucleosome assembly protein 1-like 4 (312 aa).

Residues 24–78 are a coiled coil; sequence VETLKNKLQALAEQHVDVLESLAPSVRKRVDVLMEIQSQHDELEVKFFEEKAALE. The short motif at 45–60 is the Nuclear export signal element; it reads LAPSVRKRVDVLMEIQ. The interval 289-312 is disordered; sequence DYGASWVDDEEEDDNNDEYSDEEA.

Belongs to the nucleosome assembly protein (NAP) family.

Its subcellular location is the nucleus. It localises to the cytoplasm. Functionally, may modulate chromatin structure by regulation of nucleosome assembly/disassembly. The protein is Nucleosome assembly protein 1-like 4 of Oryza sativa subsp. japonica (Rice).